A 495-amino-acid chain; its full sequence is Catalase (495 aa).

Positions 1–25 are disordered; the sequence is MSNNKKLTSLFGAPVSDRENSMTAG. Residues His55 and Asn128 contribute to the active site. Tyr338 lines the heme pocket.

The protein belongs to the catalase family. In terms of assembly, homodimer. Requires heme as cofactor.

The catalysed reaction is 2 H2O2 = O2 + 2 H2O. Functionally, decomposes hydrogen peroxide into water and oxygen; serves to protect cells from the toxic effects of hydrogen peroxide. This Staphylococcus saprophyticus subsp. saprophyticus (strain ATCC 15305 / DSM 20229 / NCIMB 8711 / NCTC 7292 / S-41) protein is Catalase (katA).